The sequence spans 371 residues: tRNA-specific 2-thiouridylase MnmA (371 aa).

Residues G13–S20 and M39 each bind ATP. An interaction with target base in tRNA region spans residues N99–D101. C104 functions as the Nucleophile in the catalytic mechanism. A disulfide bridge links C104 with C200. Residue G128 coordinates ATP. Residues K150–Q152 are interaction with tRNA. C200 serves as the catalytic Cysteine persulfide intermediate. The interval R308 to Y309 is interaction with tRNA.

It belongs to the MnmA/TRMU family.

It is found in the cytoplasm. The catalysed reaction is S-sulfanyl-L-cysteinyl-[protein] + uridine(34) in tRNA + AH2 + ATP = 2-thiouridine(34) in tRNA + L-cysteinyl-[protein] + A + AMP + diphosphate + H(+). Its function is as follows. Catalyzes the 2-thiolation of uridine at the wobble position (U34) of tRNA, leading to the formation of s(2)U34. The protein is tRNA-specific 2-thiouridylase MnmA of Listeria monocytogenes serotype 4b (strain CLIP80459).